A 379-amino-acid chain; its full sequence is Succinyl-diaminopimelate desuccinylase (379 aa).

A Zn(2+)-binding site is contributed by H70. D72 is an active-site residue. Residue D103 participates in Zn(2+) binding. The Proton acceptor role is filled by E137. 3 residues coordinate Zn(2+): E138, E166, and H352.

This sequence belongs to the peptidase M20A family. DapE subfamily. In terms of assembly, homodimer. Zn(2+) serves as cofactor. It depends on Co(2+) as a cofactor.

The catalysed reaction is N-succinyl-(2S,6S)-2,6-diaminopimelate + H2O = (2S,6S)-2,6-diaminopimelate + succinate. The protein operates within amino-acid biosynthesis; L-lysine biosynthesis via DAP pathway; LL-2,6-diaminopimelate from (S)-tetrahydrodipicolinate (succinylase route): step 3/3. In terms of biological role, catalyzes the hydrolysis of N-succinyl-L,L-diaminopimelic acid (SDAP), forming succinate and LL-2,6-diaminopimelate (DAP), an intermediate involved in the bacterial biosynthesis of lysine and meso-diaminopimelic acid, an essential component of bacterial cell walls. The protein is Succinyl-diaminopimelate desuccinylase of Burkholderia orbicola (strain MC0-3).